We begin with the raw amino-acid sequence, 116 residues long: Large ribosomal subunit protein uL24 (116 aa).

Belongs to the universal ribosomal protein uL24 family. As to quaternary structure, part of the 50S ribosomal subunit.

One of two assembly initiator proteins, it binds directly to the 5'-end of the 23S rRNA, where it nucleates assembly of the 50S subunit. Its function is as follows. Located at the polypeptide exit tunnel on the outside of the subunit. The chain is Large ribosomal subunit protein uL24 from Methanosarcina barkeri (strain Fusaro / DSM 804).